We begin with the raw amino-acid sequence, 332 residues long: MEILHDEDVDDSILRDKTIAVMGYGAQGDAQANCLKDSGINVVIGETEILGGNKNPSWEKAKEDGFEVLPIDKAAEKGDVVHILLPDEVQPAIYENQIKPQLKAGKALCFSHGFNICFKRIVPPEDVDVIMVAPKAPGTEERKAYLEGFGVPGLVAVKQNPSGEAREVALAMTKAMHWTKAGILECTFEQETYEDLFGEQCVLCGGLVELMRNGFEVLVEAGYPPEMAYFECVHEMKLIVDLVWQGGIKRMAEVISNTAEYGMWAVGHQIIGPEVKEKMKEALKRVENGEFANEWVDEYKRGIPFLKASREKMGEHQVETVGAEIRKLFAQK.

The region spanning 1-186 is the KARI N-terminal Rossmann domain; it reads MEILHDEDVD…HWTKAGILEC (186 aa). NAD(+)-binding positions include 24 to 27, glutamate 46, asparagine 55, serine 57, and 87 to 90; these read YGAQ and DEVQ. Histidine 112 is a catalytic residue. Glycine 138 lines the NAD(+) pocket. In terms of domain architecture, KARI C-terminal knotted spans 187–332; sequence TFEQETYEDL…AEIRKLFAQK (146 aa). Aspartate 195, glutamate 199, glutamate 231, and glutamate 235 together coordinate Mg(2+). Residue serine 256 coordinates substrate.

The protein belongs to the ketol-acid reductoisomerase family. As to quaternary structure, homodimer. Mg(2+) serves as cofactor.

It carries out the reaction (2R)-2,3-dihydroxy-3-methylbutanoate + NAD(+) = (2S)-2-acetolactate + NADH + H(+). The protein operates within amino-acid biosynthesis; L-isoleucine biosynthesis; L-isoleucine from 2-oxobutanoate: step 2/4. It functions in the pathway amino-acid biosynthesis; L-valine biosynthesis; L-valine from pyruvate: step 2/4. In terms of biological role, involved in the biosynthesis of branched-chain amino acids (BCAA). Catalyzes an alkyl-migration followed by a ketol-acid reduction of (S)-2-acetolactate (S2AL) to yield (R)-2,3-dihydroxy-isovalerate. In the isomerase reaction, S2AL is rearranged via a Mg-dependent methyl migration to produce 3-hydroxy-3-methyl-2-ketobutyrate (HMKB). In the reductase reaction, this 2-ketoacid undergoes a metal-dependent reduction by NADH to yield (R)-2,3-dihydroxy-isovalerate. The protein is Ketol-acid reductoisomerase (NAD(+)) of Uncultured archaeon GZfos26G2.